We begin with the raw amino-acid sequence, 388 residues long: Cytochrome b (388 aa).

The next 4 helical transmembrane spans lie at 38 to 58 (FGCL…FLAM), 82 to 104 (WLLR…LHIF), 119 to 139 (VWCL…IGYV), and 185 to 205 (FFSL…LHLA). Heme b-binding residues include His-88 and His-102. The heme b site is built by His-189 and His-203. His-208 is a binding site for a ubiquinone. The next 4 membrane-spanning stretches (helical) occupy residues 231–251 (FYVK…IWIF), 295–315 (AGGV…PFFK), 327–347 (IHQG…WIGC), and 354–373 (FVTI…AITP).

Belongs to the cytochrome b family. The main subunits of complex b-c1 are: cytochrome b, cytochrome c1 and the Rieske protein. Heme b serves as cofactor.

Its subcellular location is the mitochondrion inner membrane. Functionally, component of the ubiquinol-cytochrome c reductase complex (complex III or cytochrome b-c1 complex) that is part of the mitochondrial respiratory chain. The b-c1 complex mediates electron transfer from ubiquinol to cytochrome c. Contributes to the generation of a proton gradient across the mitochondrial membrane that is then used for ATP synthesis. This Zea mays (Maize) protein is Cytochrome b (MT-CYB).